A 46-amino-acid chain; its full sequence is Mu-hexatoxin-Mg2a (46 aa).

5 cysteine pairs are disulfide-bonded: C3/C18, C10/C24, C17/C36, C21/C43, and C26/C34.

The protein belongs to the neurotoxin 02 (plectoxin) family. 02 (plectoxin) subfamily. In terms of tissue distribution, expressed by the venom gland.

Its subcellular location is the secreted. Functionally, competes for binding at site 3 of the insect voltage-gated sodium channel (Nav). Insecticidal neurotoxin. Causes temporary paralysis to lepidopteran larvae (10.3 nmol/g) or to crickets (doses from 0.93 to 119 ug/g). Is not toxic to mice when injected intracranially (high doses). The chain is Mu-hexatoxin-Mg2a from Macrothele gigas (Japanese funnel web spider).